A 353-amino-acid polypeptide reads, in one-letter code: Guanine nucleotide-binding protein alpha-1 subunit (353 aa).

The tract at residues 1–26 (MGCGMSTEEKEGKARNEEIENQLKRD) is disordered. G2 carries the N-myristoyl glycine lipid modification. A lipid anchor (S-palmitoyl cysteine) is attached at C3. Residues 7-26 (TEEKEGKARNEEIENQLKRD) are compositionally biased toward basic and acidic residues. The G-alpha domain occupies 32 to 353 (NEIKMLLLGA…QENLRLCGLI (322 aa)). Positions 35–48 (KMLLLGAGESGKST) are G1 motif. The GTP site is built by E43, S44, G45, K46, S47, T48, D150, L175, T181, G203, N269, K270, D272, and A325. Position 47 (S47) interacts with Mg(2+). The interval 173–181 (DVLRSRVKT) is G2 motif. T181 serves as a coordination point for Mg(2+). The interval 196 to 205 (YRMFDVGGQR) is G3 motif. The segment at 265 to 272 (ILFLNKID) is G4 motif. A G5 motif region spans residues 323 to 328 (TCATDT).

This sequence belongs to the G-alpha family. G(q) subfamily. As to quaternary structure, g proteins are composed of 3 units; alpha, beta and gamma. The alpha chain contains the guanine nucleotide binding site. It depends on Mg(2+) as a cofactor.

In terms of biological role, guanine nucleotide-binding proteins (G proteins) are involved as modulators or transducers in various transmembrane signaling systems. In Neurospora crassa (strain ATCC 24698 / 74-OR23-1A / CBS 708.71 / DSM 1257 / FGSC 987), this protein is Guanine nucleotide-binding protein alpha-1 subunit (gna-1).